Reading from the N-terminus, the 582-residue chain is TRAF-type zinc finger domain-containing protein 1 (582 aa).

An N-acetylalanine modification is found at A2. The segment at 27 to 103 (IHEIHCQRNI…DLELSILKLK (77 aa)) adopts a TRAF-type zinc-finger fold. S191 carries the post-translational modification Phosphoserine. The segment at 216–238 (EEQERQERNRGQQPPKEGGEDGA) is disordered. Residues S278, S320, S326, S327, S409, S415, S430, and S470 each carry the phosphoserine modification. 2 disordered regions span residues 402-509 (EGIP…IAPG) and 522-582 (PENI…EEEE). 2 stretches are compositionally biased toward polar residues: residues 454–471 (PFNN…STSG) and 486–504 (LNNS…SQNG).

As to quaternary structure, interacts with MAVS, TICAM1, TRAF1, TRAF2, TRAF3 and TRAF6.

Functionally, negative feedback regulator that controls excessive innate immune responses. Regulates both Toll-like receptor 4 (TLR4) and DDX58/RIG1-like helicases (RLH) pathways. May inhibit the LTR pathway by direct interaction with TRAF6 and attenuation of NF-kappa-B activation. May negatively regulate the RLH pathway downstream from MAVS and upstream of NF-kappa-B and IRF3. The chain is TRAF-type zinc finger domain-containing protein 1 (TRAFD1) from Macaca fascicularis (Crab-eating macaque).